A 190-amino-acid polypeptide reads, in one-letter code: Cytoplasmic envelopment protein 3 (190 aa).

A lipid anchor (N-myristoyl glycine; by host) is attached at glycine 2. Positions 14–190 are disordered; it reads GTTSGEPLKD…TKKPAASLPF (177 aa). Polar residues predominate over residues 30 to 43; sequence SLRSYDNIPPTSSS. Residues 44-58 are compositionally biased toward acidic residues; the sequence is DEGEDDDDGEDDDNE. The segment covering 80–90 has biased composition (basic and acidic residues); the sequence is SHREATHDGPK. Positions 108-123 are enriched in basic residues; sequence KQSKKKKKPSKHHHHQ. Acidic residues predominate over residues 130-139; it reads ETDDLDEEDT.

The protein belongs to the herpesviridae cytoplasmic envelopment protein 3 family. As to quaternary structure, interacts with cytoplasmic envelopment protein 2; this interaction is essential for the proper localization of each protein to the assembly complex and thus for the production of infectious virus. Post-translationally, myristoylation and palmitoylation (probably on one or more of the nearby cysteines at the N-terminus) enable membrane-binding and Golgi apparatus-specific targeting and are essential for efficient packaging. In terms of processing, phosphorylated. Phosphorylation does not seem to be required for recycling to the host Golgi apparatus. Packaging is selective for underphosphorylated forms.

It localises to the virion tegument. It is found in the virion membrane. Its subcellular location is the host cell membrane. The protein localises to the host Golgi apparatus membrane. In terms of biological role, plays an important role in the cytoplasmic envelopment of tegument proteins and capsids during the assembly and egress processes. Also participates in viral entry at the fusion step probably by regulating the core fusion machinery. The polypeptide is Cytoplasmic envelopment protein 3 (UL99) (Human cytomegalovirus (strain Merlin) (HHV-5)).